The sequence spans 470 residues: Putative multidrug resistance protein MdtD (470 aa).

Residues 1 to 11 (MTEFPDNTRWQ) lie on the Periplasmic side of the membrane. A helical transmembrane segment spans residues 12–32 (LWIVAFGFFMQSLDTTIVNTA). Topologically, residues 33–48 (LPSMAKSLGESPLHMH) are cytoplasmic. Residues 49-69 (MVVVSYVLTVAVMLPASGWLA) form a helical membrane-spanning segment. The Periplasmic segment spans residues 70–76 (DKIGVRN). The helical transmembrane segment at 77–97 (IFFAAIVLFTLGSLFCALSGT) threads the bilayer. At 98–101 (LNQL) the chain is on the cytoplasmic side. Residues 102-124 (VLARVLQGVGGAMMVPVGRLTVM) form a helical membrane-spanning segment. The Periplasmic portion of the chain corresponds to 125–137 (KIVPRAQYMAAMT). A helical transmembrane segment spans residues 138–158 (FVALPGQIGPLLGPALGGVLV). At 159-164 (EYASWH) the chain is on the cytoplasmic side. The chain crosses the membrane as a helical span at residues 165–185 (WIFLINIPVGIVGAMATFMLM). Over 186–196 (PNYTIETRRFD) the chain is Periplasmic. A helical transmembrane segment spans residues 197-217 (LPGFLLLAIGMAVLTLALDGS). The Cytoplasmic segment spans residues 218 to 224 (KSMGISP). Residues 225-245 (WTLAGLAAGGAAAILLYLFHA) form a helical membrane-spanning segment. Residues 246–262 (KKNSGALFSLRLFRTPT) lie on the Periplasmic side of the membrane. A helical membrane pass occupies residues 263-283 (FSLGLLGSFAGRIGSGMLPFM). At 284 to 285 (TP) the chain is on the cytoplasmic side. The chain crosses the membrane as a helical span at residues 286–306 (VFLQIGLGFSPFHAGLMMIPM). Residues 307-341 (VLGSMGMKRIVVQIVNRFGYRRVLVATTLGLALVS) lie on the Periplasmic side of the membrane. The chain crosses the membrane as a helical span at residues 342–362 (LLFMSVALLGWYYLLPLVLLL). The Cytoplasmic portion of the chain corresponds to 363–395 (QGMVNSARFSSMNTLTLKDLPDTLASSGNSLLS). Residues 396–416 (MIMQLSMSIGVTIAGMLLGMF) form a helical membrane-spanning segment. At 417–430 (GQQHIGIDSSATHH) the chain is on the periplasmic side. The chain crosses the membrane as a helical span at residues 431–451 (VFMYTWLCMAVIIALPAIIFA). The Cytoplasmic segment spans residues 452–470 (RVPNDTQQNMVISRRKRSL).

This sequence belongs to the major facilitator superfamily. TCR/Tet family.

Its subcellular location is the cell inner membrane. The sequence is that of Putative multidrug resistance protein MdtD from Salmonella typhi.